The chain runs to 290 residues: L-proline cis-3-hydroxylase 1 (290 aa).

Residues H107, D109, and H158 each contribute to the Fe cation site. R168 is a binding site for 2-oxoglutarate.

The protein belongs to the L-proline cis-4-/cis-3-hydroxylase family. In terms of assembly, homodimer. Fe(2+) serves as cofactor.

The catalysed reaction is L-proline + 2-oxoglutarate + O2 = cis-3-hydroxy-L-proline + succinate + CO2. With respect to regulation, inhibited by metal ions such as Co(2+), Zn(2+), Ni(2+) or Cu(2+). Is also inhibited by EDTA in vitro. Unlike the procollagen-proline cis-3- and trans-4-hydroxylases from mammals, does not necessarily require L-ascorbate for activity although it does increase the activity of the enzyme. Its function is as follows. Dioxygenase that catalyzes the 2-oxoglutarate-dependent selective hydroxylation of free L-proline to cis-3-hydroxy-L-proline (cis-3-Hyp). D-proline, trans-4-hydroxy-L-proline, cis-4-hydroxy-L-proline, cis-4-hydroxy-D-proline, and 3,4-dehydro-DL-proline are not substrates. In Streptomyces sp, this protein is L-proline cis-3-hydroxylase 1.